Here is a 306-residue protein sequence, read N- to C-terminus: Nucleotide-binding protein amb4396 (306 aa).

Positions 1 to 14 (MSDLHSSPTDQTSA) are enriched in polar residues. A disordered region spans residues 1-20 (MSDLHSSPTDQTSAPAHAGG). 29–36 (GMSGAGKT) contributes to the ATP binding site. 77–80 (DIRT) lines the GTP pocket.

The protein belongs to the RapZ-like family.

In terms of biological role, displays ATPase and GTPase activities. This Paramagnetospirillum magneticum (strain ATCC 700264 / AMB-1) (Magnetospirillum magneticum) protein is Nucleotide-binding protein amb4396.